The sequence spans 395 residues: DDB1- and CUL4-associated factor 4-like protein 2 (395 aa).

WD repeat units follow at residues 268 to 307 (SHDSAVTSLQILQDGQFLVSSDMTGTIKLWDLRATKCVTQ) and 312 to 351 (VNNSAYLPVHVNEEEGVVAAVGQDCYTRIWSLRHGHLLTT).

This Homo sapiens (Human) protein is DDB1- and CUL4-associated factor 4-like protein 2 (DCAF4L2).